The chain runs to 135 residues: MPTIQQLIRSGRSIKASKTASPALEKCPQKRGVCTRVYTTTPKKPNSALRKVARVRLSNKIEVTAYIPGEGHNLQEHSIVLIRGGRVKDLPGVRYHIVRGSLDTSGVADRKQSRSKYGAKQPKAGAAAPVKGKRR.

Position 89 is a 3-methylthioaspartic acid (Asp89). The segment at 101–135 (SLDTSGVADRKQSRSKYGAKQPKAGAAAPVKGKRR) is disordered. A compositionally biased stretch (low complexity) spans 116–135 (KYGAKQPKAGAAAPVKGKRR).

The protein belongs to the universal ribosomal protein uS12 family. In terms of assembly, part of the 30S ribosomal subunit. Contacts proteins S8 and S17. May interact with IF1 in the 30S initiation complex.

In terms of biological role, with S4 and S5 plays an important role in translational accuracy. Interacts with and stabilizes bases of the 16S rRNA that are involved in tRNA selection in the A site and with the mRNA backbone. Located at the interface of the 30S and 50S subunits, it traverses the body of the 30S subunit contacting proteins on the other side and probably holding the rRNA structure together. The combined cluster of proteins S8, S12 and S17 appears to hold together the shoulder and platform of the 30S subunit. The polypeptide is Small ribosomal subunit protein uS12 (Chlorobium phaeobacteroides (strain DSM 266 / SMG 266 / 2430)).